We begin with the raw amino-acid sequence, 180 residues long: NADH-quinone oxidoreductase subunit I (180 aa).

4Fe-4S ferredoxin-type domains lie at 48–80 and 90–119; these read IVLT…LQKA and EFFR…LTPD. 8 residues coordinate [4Fe-4S] cluster: Cys-60, Cys-63, Cys-66, Cys-70, Cys-99, Cys-102, Cys-105, and Cys-109. Basic and acidic residues predominate over residues 161–174; sequence KPKGDAEHEAKPID. Residues 161-180 form a disordered region; that stretch reads KPKGDAEHEAKPIDVKSLLP.

It belongs to the complex I 23 kDa subunit family. As to quaternary structure, NDH-1 is composed of 14 different subunits. Subunits NuoA, H, J, K, L, M, N constitute the membrane sector of the complex. It depends on [4Fe-4S] cluster as a cofactor.

The protein resides in the cell inner membrane. The catalysed reaction is a quinone + NADH + 5 H(+)(in) = a quinol + NAD(+) + 4 H(+)(out). In terms of biological role, NDH-1 shuttles electrons from NADH, via FMN and iron-sulfur (Fe-S) centers, to quinones in the respiratory chain. The immediate electron acceptor for the enzyme in this species is believed to be ubiquinone. Couples the redox reaction to proton translocation (for every two electrons transferred, four hydrogen ions are translocated across the cytoplasmic membrane), and thus conserves the redox energy in a proton gradient. The sequence is that of NADH-quinone oxidoreductase subunit I from Aeromonas salmonicida (strain A449).